The following is a 1077-amino-acid chain: Insulin receptor substrate 2-B (1077 aa).

Residues 1 to 66 are disordered; it reads MAGVLCPTEE…APASTAEDDV (66 aa). 2 consecutive short sequence motifs (YXXM motif) follow at residues 33 to 36 and 147 to 150; these read YRRM and YFAM. In terms of domain architecture, PH spans 65-170; sequence DVRKRGYLRK…WYQALSELIN (106 aa). The IRS-type PTB domain occupies 195–299; it reads FKEVWQVNVK…DTMKALKAYS (105 aa). Disordered stretches follow at residues 342–373, 428–464, and 476–495; these read ETVV…RPFR, VCSS…SDEY, and VRSN…EENT. Polar residues-rich tracts occupy residues 350-364 and 428-444; these read SAKN…SSEG and VCSS…LTRP. The segment covering 445–457 has biased composition (low complexity); that stretch reads SSSSVCGSPSDGG. Residues 477 to 495 show a composition bias toward polar residues; it reads RSNTPDSLGNTPPIQEENT. Residues 499–502 carry the YXXM motif 3 motif; that stretch reads YMSM. A compositionally biased stretch (polar residues) spans 530–544; it reads KPTNAASQQKSQTAV. Residues 530-571 are disordered; the sequence is KPTNAASQQKSQTAVSLDEDSEETNKQFAYAESPKLKDSSHV. Short sequence motifs (YXXM motif) lie at residues 595–598, 608–611, 634–637, 666–669, 713–716, and 891–894; these read YMPM, YLPM, YMMM, YMDM, YVPM, and YTTM.

Phosphorylated by INSR.

In terms of biological role, potentiates insulin signaling. The protein is Insulin receptor substrate 2-B (irs2-b) of Xenopus laevis (African clawed frog).